A 183-amino-acid polypeptide reads, in one-letter code: Neuroblastoma suppressor of tumorigenicity 1 (183 aa).

An N-terminal signal peptide occupies residues 1–19 (MVMCVRAVLVCVLLELSRA). Disulfide bonds link Cys38/Cys88, Cys52/Cys102, Cys62/Cys121, Cys66/Cys123, and Cys85/Cys126. The CTCK domain maps to 38 to 127 (CEAKNITQIV…ILHCSCQSCS (90 aa)). Positions 145–170 (AQDLPSLPDATHTHPQHAHMQADQRD) are disordered.

Belongs to the DAN family.

The protein localises to the secreted. In terms of biological role, may act as a tumor suppressor. This Danio rerio (Zebrafish) protein is Neuroblastoma suppressor of tumorigenicity 1 (nbl1).